Here is a 376-residue protein sequence, read N- to C-terminus: Serine-arginine protein 55 (376 aa).

In terms of domain architecture, RRM 1 spans 4–74; it reads SRVYVGGLPY…ERVVVEPARG (71 aa). The segment at 73-114 is disordered; the sequence is RGTARGSNRDRYDDRYGGRRGGGGGRYNEKNKNSRSSSRYGP. Residues 79–89 are compositionally biased toward basic and acidic residues; that stretch reads SNRDRYDDRYG. Residues 120 to 193 enclose the RRM 2 domain; that stretch reads YRLIVENLSS…RRIHLVEDRR (74 aa). At S165 the chain carries Phosphoserine. A compositionally biased stretch (basic and acidic residues) spans 185–194; the sequence is RIHLVEDRRG. The interval 185–376 is disordered; that stretch reads RIHLVEDRRG…PDRNNESMDD (192 aa). The span at 196 to 205 shows a compositional bias: gly residues; that stretch reads RSGGGGGSGR. Composition is skewed to basic residues over residues 215–263 and 271–283; these read SRSR…SRSN and SKSK…RSRS. Residues 284–304 show a composition bias toward basic and acidic residues; sequence PKRERDSRSRSRSVSKRESRS.

It belongs to the splicing factor SR family. Post-translationally, extensively phosphorylated on serine residues in the RS domain.

The protein resides in the nucleus. Functionally, essential for development. May have a critical role in splicing or in controlling alternative splice site use of at least some pre-mRNA in vivo. Not required for all splicing. May play a general role in the condensation or decondensation of chromatin. The chain is Serine-arginine protein 55 (B52) from Drosophila melanogaster (Fruit fly).